The primary structure comprises 24 residues: Superoxide dismutase [Cu-Zn], chloroplastic (24 aa).

It belongs to the Cu-Zn superoxide dismutase family. In terms of assembly, homodimer. Cu cation serves as cofactor. Requires Zn(2+) as cofactor.

It localises to the plastid. Its subcellular location is the chloroplast. The catalysed reaction is 2 superoxide + 2 H(+) = H2O2 + O2. In terms of biological role, destroys radicals which are normally produced within the cells and which are toxic to biological systems. This chain is Superoxide dismutase [Cu-Zn], chloroplastic, found in Picea abies (Norway spruce).